Consider the following 805-residue polypeptide: Cell division cycle 5-related protein (805 aa).

2 HTH myb-type domains span residues 1–58 (MPRI…DPSI) and 59–108 (KKTE…DQAQ). 2 consecutive DNA-binding regions (H-T-H motif) follow at residues 31–54 (WSRI…YEWL) and 82–104 (WRTI…EYLL). Positions 108-127 (QAKEGDKDEGDDPRKLRPGE) are enriched in basic and acidic residues. Disordered stretches follow at residues 108–143 (QAKE…DPID), 246–293 (HLEG…HVKK), 409–442 (LSTP…QRSV), and 530–556 (LERR…VLRP). The stretch at 142 to 193 (IDMDEDELEMLSEARARLANTQGKKAKRKAREKQLEEARRLAALQKRRELRA) forms a coiled coil. Residues 246–274 (HLEGKMRDEIEQQERKKDKERMKKKKESD) are compositionally biased toward basic and acidic residues. Coiled-coil stretches lie at residues 511–542 (EDAA…VQRE) and 678–804 (YTRA…SKLQ).

The protein belongs to the CEF1 family. Component of the precatalytic, catalytic and postcatalytic spliceosome complexes.

The protein localises to the nucleus. The protein resides in the cytoplasm. In terms of biological role, DNA-binding protein involved in cell cycle control. May act as a transcription activator. Plays a role in pre-mRNA splicing as core component of precatalytic, catalytic and postcatalytic spliceosomal complexes. May also play a role in the response to DNA damage (DDR). In Nematostella vectensis (Starlet sea anemone), this protein is Cell division cycle 5-related protein (cdc5l).